The chain runs to 329 residues: Cytosolic arginine sensor for mTORC1 subunit 1 (329 aa).

S14 is subject to Phosphoserine; by PKB/AKT1. ACT domains lie at 72–138 (AEAT…HTLA) and 260–321 (GELW…EVLQ). Residues 111–112 (SV), G274, 280–281 (IV), and 300–304 (TFNFD) contribute to the L-arginine site.

It belongs to the GATS family. Forms homodimers and heterodimers with CASTOR2. Interacts with the GATOR2 complex which is composed of MIOS, SEC13, SEH1L, WDR24 and WDR59; the interaction is negatively regulated by arginine. Interacts with TM4SF5; the interaction is positively regulated by leucine and is negatively regulated by arginine. Post-translationally, phosphorylation at Ser-14 by AKT1, promoting the interaction between CASTOR1 and RNF167. In terms of processing, ubiquitinated by RNF167 via 'Lys-29'-polyubiquitination, leading to its degradation, releasing the GATOR2 complex. Ubiquitination by RNF167 is promoted by phosphorylation at Ser-14 by AKT1. Widely expressed.

The protein localises to the cytoplasm. Its subcellular location is the cytosol. Functions as an intracellular arginine sensor within the amino acid-sensing branch of the TORC1 signaling pathway. As a homodimer or a heterodimer with CASTOR2, binds and inhibits the GATOR subcomplex GATOR2 and thereby mTORC1. Binding of arginine to CASTOR1 allosterically disrupts the interaction of CASTOR1-containing dimers with GATOR2 which can in turn activate mTORC1 and the TORC1 signaling pathway. This chain is Cytosolic arginine sensor for mTORC1 subunit 1, found in Homo sapiens (Human).